Consider the following 206-residue polypeptide: Sperm acrosome developmental regulator (206 aa).

Residues 180–206 form a disordered region; the sequence is RRHHVRCHAAPRPNPAQSLKLDAQSPL.

As to expression, expressed in sperm (at protein level).

It localises to the cytoplasmic vesicle. The protein resides in the secretory vesicle. Its subcellular location is the acrosome. Functionally, may play a role in acrosome formation and nucleus shaping during spermiogenesis. The sequence is that of Sperm acrosome developmental regulator from Homo sapiens (Human).